The chain runs to 296 residues: 4-diphosphocytidyl-2-C-methyl-D-erythritol kinase (296 aa).

The active site involves Lys11. Position 95-105 (95-105) interacts with ATP; the sequence is PVAAGMAGGSS. Asp137 is an active-site residue.

Belongs to the GHMP kinase family. IspE subfamily.

The catalysed reaction is 4-CDP-2-C-methyl-D-erythritol + ATP = 4-CDP-2-C-methyl-D-erythritol 2-phosphate + ADP + H(+). Its pathway is isoprenoid biosynthesis; isopentenyl diphosphate biosynthesis via DXP pathway; isopentenyl diphosphate from 1-deoxy-D-xylulose 5-phosphate: step 3/6. In terms of biological role, catalyzes the phosphorylation of the position 2 hydroxy group of 4-diphosphocytidyl-2C-methyl-D-erythritol. The protein is 4-diphosphocytidyl-2-C-methyl-D-erythritol kinase of Clostridioides difficile (strain 630) (Peptoclostridium difficile).